The following is a 182-amino-acid chain: Riboflavin kinase (182 aa).

2 residues coordinate Mg(2+): T39 and N41. E117 functions as the Nucleophile in the catalytic mechanism.

The protein belongs to the flavokinase family. Requires Zn(2+) as cofactor. Mg(2+) is required as a cofactor.

The enzyme catalyses riboflavin + ATP = FMN + ADP + H(+). It functions in the pathway cofactor biosynthesis; FMN biosynthesis; FMN from riboflavin (ATP route): step 1/1. Its function is as follows. Catalyzes the phosphorylation of riboflavin (vitamin B2) to form flavin mononucleotide (FMN) coenzyme. The sequence is that of Riboflavin kinase (FMN1) from Lodderomyces elongisporus (strain ATCC 11503 / CBS 2605 / JCM 1781 / NBRC 1676 / NRRL YB-4239) (Yeast).